Here is a 176-residue protein sequence, read N- to C-terminus: RNA pyrophosphohydrolase (176 aa).

The region spanning 8-159 (PYRTCVGMML…KRPVYERVVK (152 aa)) is the Nudix hydrolase domain. Positions 47–68 (GGVDPGEDTWAAAKRELYEETS) match the Nudix box motif.

Belongs to the Nudix hydrolase family. RppH subfamily. Requires a divalent metal cation as cofactor.

Its function is as follows. Accelerates the degradation of transcripts by removing pyrophosphate from the 5'-end of triphosphorylated RNA, leading to a more labile monophosphorylated state that can stimulate subsequent ribonuclease cleavage. The sequence is that of RNA pyrophosphohydrolase from Rhodopseudomonas palustris (strain BisA53).